The sequence spans 494 residues: Cytochrome P450 2A10 (494 aa).

K379 carries the N6-acetyllysine modification. Residue C439 coordinates heme.

This sequence belongs to the cytochrome P450 family. The cofactor is heme. Expressed in liver and lung as well as in nasal tissues.

The protein localises to the endoplasmic reticulum membrane. It localises to the microsome membrane. The catalysed reaction is an organic molecule + reduced [NADPH--hemoprotein reductase] + O2 = an alcohol + oxidized [NADPH--hemoprotein reductase] + H2O + H(+). Catalyzes the oxygenation of a variety of substrates, including ethanol and procarcinogens such as N-nitrosodiethylamine and phenacetin. Exhibits a high coumarin 7-hydroxylase activity. Converts also testosterone to androstenedione. The chain is Cytochrome P450 2A10 (CYP2A10) from Oryctolagus cuniculus (Rabbit).